The primary structure comprises 486 residues: Cardiolipin synthase A (486 aa).

The next 2 membrane-spanning stretches (helical) occupy residues 3–23 (TFYTVISWLSVFGYWLLIAGV) and 38–58 (MAWLLIIYILPLVGIIAYLSF). 2 consecutive PLD phosphodiesterase domains span residues 219-246 (MDLRQHRKIVLIDNYVAYTGSMNMVDPR) and 399-426 (EGGLLHSKSVLVDGQLSLVGTVNLDMRS). Catalysis depends on residues histidine 224, lysine 226, aspartate 231, histidine 404, lysine 406, and aspartate 411.

This sequence belongs to the phospholipase D family. Cardiolipin synthase subfamily. ClsA sub-subfamily.

It is found in the cell inner membrane. The catalysed reaction is 2 a 1,2-diacyl-sn-glycero-3-phospho-(1'-sn-glycerol) = a cardiolipin + glycerol. Catalyzes the reversible phosphatidyl group transfer from one phosphatidylglycerol molecule to another to form cardiolipin (CL) (diphosphatidylglycerol) and glycerol. The protein is Cardiolipin synthase A of Yersinia pseudotuberculosis serotype O:3 (strain YPIII).